The primary structure comprises 597 residues: Sodium/mannose cotransporter SLC5A10 (597 aa).

The Extracellular segment spans residues 1 to 16; sequence MAVDNSTSDAHTPGRQ. Asn5 carries N-linked (GlcNAc...) asparagine glycosylation. The chain crosses the membrane as a helical span at residues 17–37; it reads LTVVDIAIIAVYFALNVAVGI. Over 38 to 73 the chain is Cytoplasmic; that stretch reads WSSCRASRNTVRGYFLAGRDMTWWPIGASLFASSEG. A helical membrane pass occupies residues 74 to 94; it reads SGLFIGLAGSGAAGGLAVAGF. The Extracellular portion of the chain corresponds to 95–100; sequence EWNATY. Asn97 is a glycosylation site (N-linked (GlcNAc...) asparagine). The chain crosses the membrane as a helical span at residues 101–121; that stretch reads VLLALAWVFVPIYLSSEIVTM. Residues 122-139 lie on the Cytoplasmic side of the membrane; that stretch reads PEYMQKRYGGQRIRMYLS. The helical transmembrane segment at 140 to 162 threads the bilayer; sequence VLSLLLSVFTKISIDLYAGALFV. At 163-174 the chain is on the extracellular side; that stretch reads HICLGWNFYLST. Residues 175–195 form a helical membrane-spanning segment; it reads VIMLAITALYTIAGGLTAVIY. The Cytoplasmic segment spans residues 196 to 201; the sequence is TDALQT. The helical transmembrane segment at 202-222 threads the bilayer; it reads LVMVAGAVILTIKAFEQIGGY. Residues 223-265 are Extracellular-facing; that stretch reads EQLAEAYAQAVPSRTISNTTCHVPRADAMHMFRDPYTADLPWT. A helical transmembrane segment spans residues 266 to 286; the sequence is GMTFGLTIMAAWYWCTDQVIV. The Cytoplasmic portion of the chain corresponds to 287-301; it reads QRSLSARDLNHAKGG. Residues 302 to 322 traverse the membrane as a helical segment; the sequence is SILASYLKMLPMGLMVMPGMI. At 323-367 the chain is on the extracellular side; sequence SRVLFPDDVGCVVPAECLRACGAEIGCSNIAYPKLVMELMPTGLR. Residues 368–388 form a helical membrane-spanning segment; sequence GLMVAVMMAALMSSLTSIFNS. At 389-410 the chain is on the cytoplasmic side; it reads SSTLFTMDIWRRLRPRAGEREL. A helical transmembrane segment spans residues 411-431; sequence LLVGRLVIVVLVGVSVAWIPV. At 432-444 the chain is on the extracellular side; sequence LQGSNGGQLFIYM. A helical transmembrane segment spans residues 445–465; that stretch reads QSVTSSLAPPVTAVFVLGIFW. Topologically, residues 466-472 are cytoplasmic; it reads RRANEQG. The helical transmembrane segment at 473–493 threads the bilayer; it reads AFWGLMAGLAVGATRLVLEFL. Residues 494–514 are Extracellular-facing; that stretch reads HPAPPCGHPDTRPPILHGVHY. A helical transmembrane segment spans residues 515–535; sequence LHFAVALFLLSGAVVVAGSLL. Topologically, residues 536 to 576 are cytoplasmic; that stretch reads TPHPQGVQIQSLTWWTLAQDLPLGVKTGDGRASQRHAFWAR. The helical transmembrane segment at 577 to 597 threads the bilayer; it reads VCGVNAILLMCVNIFFYTYFA.

It belongs to the sodium:solute symporter (SSF) (TC 2.A.21) family. In terms of tissue distribution, predominantyl expressed in kidney. Also detected at very low levels in testes, skeletal muscle, and spleen.

The protein resides in the apical cell membrane. It carries out the reaction D-mannose(out) + Na(+)(out) = D-mannose(in) + Na(+)(in). The catalysed reaction is D-fructopyranose(out) + Na(+)(out) = D-fructopyranose(in) + Na(+)(in). Functionally, electrogenic Na+-coupled sugar symporter that actively transports D-mannose or D-fructose at the plasma membrane, with a Na+ to sugar coupling ratio of 1:1. Transporter activity is driven by a transmembrane Na+ electrochemical gradient set by the Na+/K+ pump. Exclusively recognizes sugar substrates having a pyranose ring with an axial hydroxyl group on carbon 2. Has likely evolved to enable renal reabsorption of D-mannose, an important constituent of oligosaccharide chains of glycoproteins. Contributes to dietary D-fructose reabsorption from glomerular filtrate across the brush border of the kidney. The sequence is that of Sodium/mannose cotransporter SLC5A10 (SLC5A10) from Bos taurus (Bovine).